The sequence spans 274 residues: Shikimate dehydrogenase (NADP(+)) (274 aa).

Shikimate is bound by residues 14–16 and T61; that span reads SKS. K65 (proton acceptor) is an active-site residue. E77 is an NADP(+) binding site. Shikimate-binding residues include N86 and D102. NADP(+)-binding positions include 126–130, 149–154, and M212; these read GAGGA and NRTLEK. A shikimate-binding site is contributed by Y214. G237 is a binding site for NADP(+).

It belongs to the shikimate dehydrogenase family. In terms of assembly, homodimer.

The catalysed reaction is shikimate + NADP(+) = 3-dehydroshikimate + NADPH + H(+). The protein operates within metabolic intermediate biosynthesis; chorismate biosynthesis; chorismate from D-erythrose 4-phosphate and phosphoenolpyruvate: step 4/7. Involved in the biosynthesis of the chorismate, which leads to the biosynthesis of aromatic amino acids. Catalyzes the reversible NADPH linked reduction of 3-dehydroshikimate (DHSA) to yield shikimate (SA). The protein is Shikimate dehydrogenase (NADP(+)) of Actinobacillus pleuropneumoniae serotype 5b (strain L20).